We begin with the raw amino-acid sequence, 360 residues long: Magnesium-protoporphyrin IX monomethyl ester [oxidative] cyclase (360 aa).

The protein belongs to the AcsF family. Fe cation is required as a cofactor.

It catalyses the reaction Mg-protoporphyrin IX 13-monomethyl ester + 3 NADPH + 3 O2 + 2 H(+) = 3,8-divinyl protochlorophyllide a + 3 NADP(+) + 5 H2O. It functions in the pathway porphyrin-containing compound metabolism; chlorophyll biosynthesis (light-independent). In terms of biological role, catalyzes the formation of the isocyclic ring in chlorophyll biosynthesis. Mediates the cyclase reaction, which results in the formation of divinylprotochlorophyllide (Pchlide) characteristic of all chlorophylls from magnesium-protoporphyrin IX 13-monomethyl ester (MgPMME). This is Magnesium-protoporphyrin IX monomethyl ester [oxidative] cyclase from Synechococcus sp. (strain WH7803).